A 425-amino-acid polypeptide reads, in one-letter code: Serine--tRNA ligase (425 aa).

233 to 235 (TAE) contributes to the L-serine binding site. Residue 264 to 266 (RRE) participates in ATP binding. Residue Glu287 participates in L-serine binding. 351-354 (EISS) contributes to the ATP binding site. Position 387 (Ser387) interacts with L-serine.

This sequence belongs to the class-II aminoacyl-tRNA synthetase family. Type-1 seryl-tRNA synthetase subfamily. Homodimer. The tRNA molecule binds across the dimer.

The protein localises to the cytoplasm. It catalyses the reaction tRNA(Ser) + L-serine + ATP = L-seryl-tRNA(Ser) + AMP + diphosphate + H(+). It carries out the reaction tRNA(Sec) + L-serine + ATP = L-seryl-tRNA(Sec) + AMP + diphosphate + H(+). It participates in aminoacyl-tRNA biosynthesis; selenocysteinyl-tRNA(Sec) biosynthesis; L-seryl-tRNA(Sec) from L-serine and tRNA(Sec): step 1/1. In terms of biological role, catalyzes the attachment of serine to tRNA(Ser). Is also able to aminoacylate tRNA(Sec) with serine, to form the misacylated tRNA L-seryl-tRNA(Sec), which will be further converted into selenocysteinyl-tRNA(Sec). This chain is Serine--tRNA ligase, found in Thermotoga maritima (strain ATCC 43589 / DSM 3109 / JCM 10099 / NBRC 100826 / MSB8).